The primary structure comprises 122 residues: Large ribosomal subunit protein uL14 (122 aa).

Forms a cluster with proteins L3 and L19. In the 70S ribosome, L14 and L19 interact and together make contacts with the 16S rRNA in bridges B5 and B8. Part of the 50S ribosomal subunit.

In terms of biological role, binds to 23S rRNA. Forms part of two intersubunit bridges in the 70S ribosome. This is Large ribosomal subunit protein uL14 from Rhodopseudomonas palustris (strain ATCC BAA-98 / CGA009).